The following is a 182-amino-acid chain: Putative manganese efflux pump MntP (182 aa).

A run of 6 helical transmembrane segments spans residues 6 to 26, 37 to 57, 71 to 91, 101 to 121, 131 to 151, and 162 to 182; these read LIPLIIMAFALGMDAFSVSLG, ILYIGMTIGIFHIIMPFIGMV, HFAGAILLIGLGFYIVYSTIL, IGISLFVFAFGVSIDSFSVGL, IITILLFGFVSMLLAWIGLLI, and YGEIVGGIILVGFGLYILFPI.

The protein belongs to the MntP (TC 9.B.29) family.

The protein localises to the cell membrane. In terms of biological role, probably functions as a manganese efflux pump. This is Putative manganese efflux pump MntP from Bacillus cereus (strain G9842).